We begin with the raw amino-acid sequence, 22 residues long: Magnificalysin II (22 aa).

The tract at residues 3–12 is plays an important role in the hemolytic activity; the sequence is ALAGTIIDGA. The tract at residues 11 to 22 is N-terminal region; the sequence is GASLGFDILNKV.

The protein belongs to the actinoporin family. Sea anemone subfamily. In terms of assembly, octamer or nonamer in membranes. Monomer in the soluble state.

The protein resides in the secreted. The protein localises to the nematocyst. It is found in the target cell membrane. In terms of biological role, pore-forming protein that forms cations-selective hydrophilic pores of around 1 nm and causes cytolysis. Pore formation is a multi-step process that involves specific recognition of membrane sphingomyelin (but neither cholesterol nor phosphatidylcholine) using aromatic rich region and adjacent phosphocholine (POC) binding site, firm binding to the membrane (mainly driven by hydrophobic interactions) accompanied by the transfer of the N-terminal region to the lipid-water interface and finally pore formation after oligomerization of monomers. The protein is Magnificalysin II of Heteractis magnifica (Magnificent sea anemone).